Here is a 238-residue protein sequence, read N- to C-terminus: Ribonuclease PH (238 aa).

Phosphate contacts are provided by residues R86 and 124–126 (GTR).

This sequence belongs to the RNase PH family. In terms of assembly, homohexameric ring arranged as a trimer of dimers.

It catalyses the reaction tRNA(n+1) + phosphate = tRNA(n) + a ribonucleoside 5'-diphosphate. Functionally, phosphorolytic 3'-5' exoribonuclease that plays an important role in tRNA 3'-end maturation. Removes nucleotide residues following the 3'-CCA terminus of tRNAs; can also add nucleotides to the ends of RNA molecules by using nucleoside diphosphates as substrates, but this may not be physiologically important. Probably plays a role in initiation of 16S rRNA degradation (leading to ribosome degradation) during starvation. This is Ribonuclease PH from Citrobacter koseri (strain ATCC BAA-895 / CDC 4225-83 / SGSC4696).